The chain runs to 943 residues: Isoleucine--tRNA ligase (943 aa).

Positions 58 to 68 match the 'HIGH' region motif; that stretch reads PYANGNIHIGH. Glu567 contacts L-isoleucyl-5'-AMP. Positions 608–612 match the 'KMSKS' region motif; that stretch reads KMSKS. Lys611 is an ATP binding site. Zn(2+) is bound by residues Cys906, Cys909, Cys926, and Cys929.

This sequence belongs to the class-I aminoacyl-tRNA synthetase family. IleS type 1 subfamily. As to quaternary structure, monomer. Zn(2+) serves as cofactor.

The protein resides in the cytoplasm. The catalysed reaction is tRNA(Ile) + L-isoleucine + ATP = L-isoleucyl-tRNA(Ile) + AMP + diphosphate. In terms of biological role, catalyzes the attachment of isoleucine to tRNA(Ile). As IleRS can inadvertently accommodate and process structurally similar amino acids such as valine, to avoid such errors it has two additional distinct tRNA(Ile)-dependent editing activities. One activity is designated as 'pretransfer' editing and involves the hydrolysis of activated Val-AMP. The other activity is designated 'posttransfer' editing and involves deacylation of mischarged Val-tRNA(Ile). In Azotobacter vinelandii (strain DJ / ATCC BAA-1303), this protein is Isoleucine--tRNA ligase.